Consider the following 593-residue polypeptide: tRNA (guanine(26)-N(2))-dimethyltransferase 1 (593 aa).

Residues 9 to 465 enclose the Trm1 methyltransferase domain; the sequence is TVIKEGEAEV…APMEIIWDIM (457 aa). R36 contacts S-adenosyl-L-methionine. A disordered region spans residues 56-118; sequence AMLSKRARSS…KTAYESARRE (63 aa). 2 stretches are compositionally biased toward basic and acidic residues: residues 68-81 and 88-118; these read VVEK…KEET and DNGK…ARRE. S-adenosyl-L-methionine is bound by residues R134, D152, and V185. Residues C315, C318, C350, and C353 each contribute to the Zn(2+) site. The disordered stretch occupies residues 546–593; the sequence is VNGHLNNNHKEAGDEEEEEEEEEPEEDIIEGEPELKRQKTTEDFASTS. The span at 558-577 shows a compositional bias: acidic residues; it reads GDEEEEEEEEEPEEDIIEGE. The segment covering 578-587 has biased composition (basic and acidic residues); sequence PELKRQKTTE.

Belongs to the class I-like SAM-binding methyltransferase superfamily. Trm1 family.

It catalyses the reaction guanosine(26) in tRNA + 2 S-adenosyl-L-methionine = N(2)-dimethylguanosine(26) in tRNA + 2 S-adenosyl-L-homocysteine + 2 H(+). Its function is as follows. Dimethylates a single guanine residue at position 26 of most tRNAs using S-adenosyl-L-methionine as donor of the methyl groups. In Arabidopsis thaliana (Mouse-ear cress), this protein is tRNA (guanine(26)-N(2))-dimethyltransferase 1.